The sequence spans 907 residues: Glutamate receptor 1 (907 aa).

Residues 1–18 (MPYIFAFFCTGFLGAVVG) form the signal peptide. The Extracellular segment spans residues 19 to 536 (ANFPNNIQIG…GVFSFLDPLA (518 aa)). N-linked (GlcNAc...) asparagine glycosylation is found at Asn63, Asn249, Asn257, Asn363, Asn401, and Asn406. Residues Cys75 and Cys323 are joined by a disulfide bond. The L-glutamate site is built by Pro492, Thr494, and Arg499. Residues 537 to 557 (YEIWMCIVFAYIGVSVVLFLV) form a helical membrane-spanning segment. Over 558–584 (SRFSPYEWHSEEFEEGRDQTTSDQSNE) the chain is Cytoplasmic. The helical; Pore-forming intramembrane region spans 585-600 (FGIFNSLWFSLGAFMQ). Residues 601 to 603 (QGC) lie within the membrane without spanning it. A lipid anchor (S-palmitoyl cysteine) is attached at Cys603. At 604–609 (DISPRS) the chain is on the cytoplasmic side. Residues 610 to 630 (LSGRIVGGVWWFFTLIIISSY) form a helical membrane-spanning segment. The Extracellular segment spans residues 631–805 (TANLAAFLTV…DKTSALSLSN (175 aa)). Phosphoserine is present on Ser645. Residues Ser668 and Thr669 each coordinate L-glutamate. Position 710 is a phosphoserine; by PKC (Ser710). L-glutamate is bound at residue Glu719. Cys732 and Cys787 form a disulfide bridge. A helical membrane pass occupies residues 806 to 826 (VAGVFYILIGGLGLAMLVALI). Topologically, residues 827 to 907 (EFCYKSRSES…SGMPLGATGL (81 aa)) are cytoplasmic. The S-palmitoyl cysteine moiety is linked to residue Cys829. Ser849 carries the phosphoserine; by PKC, PKA and CAMK2 modification. Residues 857-881 (STLPRNSGAGASGGGGSGENGRVVS) are disordered. Ser863 is modified (phosphoserine; by PKC, PKA and PKG/PRKG2). Residues 866-875 (GASGGGGSGE) are compositionally biased toward gly residues. The PDZ-binding signature appears at 904 to 907 (ATGL).

The protein belongs to the glutamate-gated ion channel (TC 1.A.10.1) family. GRIA1 subfamily. In terms of assembly, homotetramer or heterotetramer of pore-forming glutamate receptor subunits; heteromeric assembly can be the result of both receptor subtype and flip-flop forms and according the composition, one partner can be dominant with respect to the fast desensitizing current component, whereas the other can determine the steady-state component. Tetramers may be formed by the dimerization of dimers. Found in a complex with GRIA2, GRIA3, GRIA4, CNIH2, CNIH3, CACNG2, CACNG3, CACNG4, CACNG5, CACNG7 and CACNG8. Interacts with HIP1 and RASGRF2. Interacts with SYNDIG1 and GRIA2. Interacts with DLG1 (via C-terminus). Interacts with LRFN1. Interacts with PRKG2. Interacts with CNIH2 and CACNG2. Interacts with CACNG5; this interaction modulates the gating. Interacts (via C-terminus) with PDLIM4 (via LIM domain); this interaction as well as the interaction of PDLIM4 with alpha-actinin is required for their colocalization in early endosomes. Interacts with SNX27 (via PDZ domain); the interaction is required for recycling to the plasma membrane when endocytosed and prevent degradation in lysosomes. Interacts (via PDZ-binding motif) with SHANK3 (via PDZ domain). Interacts with CACNG3; associates GRIA1 with the adapter protein complex 4 (AP-4) to target GRIA1 to the somatodendritic compartment of neurons. Interacts with CACNG2; this interaction mediates traffick to the plasma membrane and modulation of desensitization. Interaction with CNIH2 and CNIH3; this interaction promotes expression at the plasma membrane and extensively modulates their gating properties by slowing deactivation and desensitization kinetics. Found in a complex with GRIA2, GRIA3, GRIA4, DLG4, CACNG8 and CNIH2. Post-translationally, phosphorylated at Ser-645. Phosphorylated at Ser-710 by PKC. Phosphorylated at Ser-849 by PKC, PKA and CAMK2. Phosphorylated at Ser-863 by PKC, PKA and PRKG2. Phosphorylation of Ser-863 is reduced by induction of long-term depression and increased by induction of long-term potentiation. Palmitoylated. Depalmitoylated by CPT1C and upon L-glutamate stimulation. ZDHHC3/GODZ specifically palmitoylates Cys-603, which leads to Golgi retention and decreased cell surface expression. In contrast, Cys-829 palmitoylation does not affect cell surface expression but regulates stimulation-dependent endocytosis. Detected in cerebellum (at protein level).

The protein resides in the cell membrane. It is found in the endoplasmic reticulum membrane. Its subcellular location is the postsynaptic cell membrane. The protein localises to the postsynaptic density membrane. It localises to the cell projection. The protein resides in the dendrite. It is found in the dendritic spine. Its subcellular location is the early endosome membrane. The protein localises to the recycling endosome membrane. It localises to the presynapse. The protein resides in the synapse. It carries out the reaction Ca(2+)(in) = Ca(2+)(out). The enzyme catalyses Na(+)(in) = Na(+)(out). The catalysed reaction is Mg(2+)(in) = Mg(2+)(out). It catalyses the reaction Li(+)(in) = Li(+)(out). It carries out the reaction K(+)(in) = K(+)(out). The enzyme catalyses Sr(2+)(in) = Sr(2+)(out). With respect to regulation, glutamate-gated receptor activity inhibited by DNQX (6,7-dinitroquinoxaline-2,3-dione). Ionotropic glutamate receptor that functions as a ligand-gated cation channel, gated by L-glutamate and glutamatergic agonists such as alpha-amino-3-hydroxy-5-methyl-4-isoxazolepropionic acid (AMPA), quisqualic acid, and kainic acid. L-glutamate acts as an excitatory neurotransmitter at many synapses in the central nervous system. Binding of the excitatory neurotransmitter L-glutamate induces a conformation change, leading to the opening of the cation channel, and thereby converts the chemical signal to an electrical impulse upon entry of monovalent and divalent cations such as sodium and calcium. The receptor then desensitizes rapidly and enters in a transient inactive state, characterized by the presence of bound agonist. In the presence of CACNG2 or CACNG4 or CACNG7 or CACNG8, shows resensitization which is characterized by a delayed accumulation of current flux upon continued application of L-glutamate. Resensitization is blocked by CNIH2 through interaction with CACNG8 in the CACNG8-containing AMPA receptors complex. Calcium (Ca(2+)) permeability depends on subunits composition and, heteromeric channels containing edited GRIA2 subunit are calcium-impermeable. Also permeable to other divalents cations such as strontium(2+) and magnesium(2+) and monovalent cations such as potassium(1+) and lithium(1+). The polypeptide is Glutamate receptor 1 (Rattus norvegicus (Rat)).